Consider the following 101-residue polypeptide: Small ribosomal subunit protein uS14 (101 aa).

The protein belongs to the universal ribosomal protein uS14 family. As to quaternary structure, part of the 30S ribosomal subunit. Contacts proteins S3 and S10.

Binds 16S rRNA, required for the assembly of 30S particles and may also be responsible for determining the conformation of the 16S rRNA at the A site. The sequence is that of Small ribosomal subunit protein uS14 from Paramagnetospirillum magneticum (strain ATCC 700264 / AMB-1) (Magnetospirillum magneticum).